The chain runs to 271 residues: Aliphatic sulfonates import ATP-binding protein SsuB (271 aa).

Residues 13–234 (ITLESIGKRY…RKGSAKLAAL (222 aa)) enclose the ABC transporter domain. 45–52 (GRSGCGKS) is a binding site for ATP. A disordered region spans residues 250 to 271 (EASRQGIKASRQGTATSRRVAN). Positions 260–271 (RQGTATSRRVAN) are enriched in polar residues.

This sequence belongs to the ABC transporter superfamily. Aliphatic sulfonates importer (TC 3.A.1.17.2) family. The complex is composed of two ATP-binding proteins (SsuB), two transmembrane proteins (SsuC) and a solute-binding protein (SsuA).

Its subcellular location is the cell inner membrane. It catalyses the reaction ATP + H2O + aliphatic sulfonate-[sulfonate-binding protein]Side 1 = ADP + phosphate + aliphatic sulfonateSide 2 + [sulfonate-binding protein]Side 1.. Part of the ABC transporter complex SsuABC involved in aliphatic sulfonates import. Responsible for energy coupling to the transport system. The polypeptide is Aliphatic sulfonates import ATP-binding protein SsuB (Yersinia pestis bv. Antiqua (strain Antiqua)).